The chain runs to 48 residues: SPbeta prophage-derived uncharacterized protein YotE (48 aa).

The chain is SPbeta prophage-derived uncharacterized protein YotE (yotE) from Bacillus subtilis (strain 168).